A 307-amino-acid chain; its full sequence is CRISPR-associated endonuclease Cas1 2 (307 aa).

Residues Glu142, His206, and Glu221 each contribute to the Mn(2+) site.

Belongs to the CRISPR-associated endonuclease Cas1 family. Homodimer, forms a heterotetramer with a Cas2 homodimer. Forms oligomers, probably binds nucleic acids as a homodimer. Requires Mg(2+) as cofactor. Mn(2+) is required as a cofactor.

Functionally, CRISPR (clustered regularly interspaced short palindromic repeat), is an adaptive immune system that provides protection against mobile genetic elements (viruses, transposable elements and conjugative plasmids). CRISPR clusters contain spacers, sequences complementary to antecedent mobile elements, and target invading nucleic acids. CRISPR clusters are transcribed and processed into CRISPR RNA (crRNA). Acts as a dsDNA endonuclease. Involved in the integration of spacer DNA into the CRISPR cassette. In vitro catalyzes a concerted transesterification reaction on branched DNA, as would be expected during integration of protospacers into the CRISPR leader sequence; Cas2 is not required in vitro. This reaction requires a 3'-OH group at the branch point. Binds ss- and dsDNA and ss- and dsRNA with approximately equal affinity. May be able to anneal complementary DNA strands. This is CRISPR-associated endonuclease Cas1 2 from Saccharolobus solfataricus (strain ATCC 35092 / DSM 1617 / JCM 11322 / P2) (Sulfolobus solfataricus).